Consider the following 185-residue polypeptide: Large ribosomal subunit protein uL5 (185 aa).

The protein belongs to the universal ribosomal protein uL5 family. As to quaternary structure, part of the 50S ribosomal subunit; part of the 5S rRNA/L5/L18/L25 subcomplex. Contacts the 5S rRNA and the P site tRNA. Forms a bridge to the 30S subunit in the 70S ribosome.

Functionally, this is one of the proteins that bind and probably mediate the attachment of the 5S RNA into the large ribosomal subunit, where it forms part of the central protuberance. In the 70S ribosome it contacts protein S13 of the 30S subunit (bridge B1b), connecting the 2 subunits; this bridge is implicated in subunit movement. Contacts the P site tRNA; the 5S rRNA and some of its associated proteins might help stabilize positioning of ribosome-bound tRNAs. This is Large ribosomal subunit protein uL5 from Streptomyces griseus subsp. griseus (strain JCM 4626 / CBS 651.72 / NBRC 13350 / KCC S-0626 / ISP 5235).